The primary structure comprises 210 residues: Uracil phosphoribosyltransferase (210 aa).

Residues Arg78, Arg103, and 130-138 (DPMLATGGT) contribute to the 5-phospho-alpha-D-ribose 1-diphosphate site. Residues Ile193 and 198–200 (GDA) each bind uracil. 5-phospho-alpha-D-ribose 1-diphosphate is bound at residue Asp199.

This sequence belongs to the UPRTase family. Mg(2+) serves as cofactor.

The enzyme catalyses UMP + diphosphate = 5-phospho-alpha-D-ribose 1-diphosphate + uracil. It functions in the pathway pyrimidine metabolism; UMP biosynthesis via salvage pathway; UMP from uracil: step 1/1. Allosterically activated by GTP. In terms of biological role, catalyzes the conversion of uracil and 5-phospho-alpha-D-ribose 1-diphosphate (PRPP) to UMP and diphosphate. This chain is Uracil phosphoribosyltransferase, found in Xanthomonas campestris pv. campestris (strain 8004).